The following is a 71-amino-acid chain: DNA gyrase inhibitor YacG (71 aa).

Positions 7, 10, 26, and 30 each coordinate Zn(2+).

The protein belongs to the DNA gyrase inhibitor YacG family. As to quaternary structure, interacts with GyrB. Zn(2+) serves as cofactor.

Inhibits all the catalytic activities of DNA gyrase by preventing its interaction with DNA. Acts by binding directly to the C-terminal domain of GyrB, which probably disrupts DNA binding by the gyrase. The polypeptide is DNA gyrase inhibitor YacG (Shewanella amazonensis (strain ATCC BAA-1098 / SB2B)).